A 115-amino-acid polypeptide reads, in one-letter code: Large ribosomal subunit protein bL19 (115 aa).

The protein belongs to the bacterial ribosomal protein bL19 family.

This protein is located at the 30S-50S ribosomal subunit interface and may play a role in the structure and function of the aminoacyl-tRNA binding site. The protein is Large ribosomal subunit protein bL19 of Clostridium tetani (strain Massachusetts / E88).